Here is a 331-residue protein sequence, read N- to C-terminus: DNA-directed RNA polymerase subunit alpha (331 aa).

An alpha N-terminal domain (alpha-NTD) region spans residues 1–226 (MLIAQRPTLT…ELFGLARELN (226 aa)). The interval 243 to 331 (LSSELSMPIE…SYDEDETTTN (89 aa)) is alpha C-terminal domain (alpha-CTD).

The protein belongs to the RNA polymerase alpha chain family. In terms of assembly, homodimer. The RNAP catalytic core consists of 2 alpha, 1 beta, 1 beta' and 1 omega subunit. When a sigma factor is associated with the core the holoenzyme is formed, which can initiate transcription.

The catalysed reaction is RNA(n) + a ribonucleoside 5'-triphosphate = RNA(n+1) + diphosphate. DNA-dependent RNA polymerase catalyzes the transcription of DNA into RNA using the four ribonucleoside triphosphates as substrates. This is DNA-directed RNA polymerase subunit alpha from Clavibacter michiganensis subsp. michiganensis (strain NCPPB 382).